A 283-amino-acid polypeptide reads, in one-letter code: Elongation factor Ts (283 aa).

The segment at 80-83 (TDFV) is involved in Mg(2+) ion dislocation from EF-Tu.

It belongs to the EF-Ts family.

Its subcellular location is the cytoplasm. Associates with the EF-Tu.GDP complex and induces the exchange of GDP to GTP. It remains bound to the aminoacyl-tRNA.EF-Tu.GTP complex up to the GTP hydrolysis stage on the ribosome. The chain is Elongation factor Ts from Klebsiella pneumoniae (strain 342).